A 295-amino-acid chain; its full sequence is Sulfotransferase 1A2 (295 aa).

48-53 contributes to the 3'-phosphoadenylyl sulfate binding site; it reads KSGTTW. 106–108 provides a ligand contact to substrate; the sequence is KTH. Residue H108 is the Proton acceptor of the active site. 3'-phosphoadenylyl sulfate is bound by residues R130, S138, Y193, 227–232, and 255–259; these read TSFKEM and FMRKG.

Belongs to the sulfotransferase 1 family. As to quaternary structure, homodimer.

The protein resides in the cytoplasm. The enzyme catalyses a phenol + 3'-phosphoadenylyl sulfate = an aryl sulfate + adenosine 3',5'-bisphosphate + H(+). Its function is as follows. Sulfotransferase that utilizes 3'-phospho-5'-adenylyl sulfate (PAPS) as sulfonate donor to catalyze the sulfate conjugation of catecholamines, phenolic drugs and neurotransmitters. Is also responsible for the sulfonation and activation of minoxidil. Mediates the metabolic activation of carcinogenic N-hydroxyarylamines to DNA binding products and could so participate as modulating factor of cancer risk. The sequence is that of Sulfotransferase 1A2 (SULT1A2) from Homo sapiens (Human).